A 188-amino-acid polypeptide reads, in one-letter code: Elongation factor P (188 aa).

Lys34 is subject to N6-(3,6-diaminohexanoyl)-5-hydroxylysine.

Belongs to the elongation factor P family. In terms of processing, may be beta-lysylated on the epsilon-amino group of Lys-34 by the combined action of EpmA and EpmB, and then hydroxylated on the C5 position of the same residue by EpmC (if this protein is present). Lysylation is critical for the stimulatory effect of EF-P on peptide-bond formation. The lysylation moiety may extend toward the peptidyltransferase center and stabilize the terminal 3-CCA end of the tRNA. Hydroxylation of the C5 position on Lys-34 may allow additional potential stabilizing hydrogen-bond interactions with the P-tRNA.

It is found in the cytoplasm. Its pathway is protein biosynthesis; polypeptide chain elongation. In terms of biological role, involved in peptide bond synthesis. Alleviates ribosome stalling that occurs when 3 or more consecutive Pro residues or the sequence PPG is present in a protein, possibly by augmenting the peptidyl transferase activity of the ribosome. Modification of Lys-34 is required for alleviation. This Xylella fastidiosa (strain M23) protein is Elongation factor P.